Consider the following 377-residue polypeptide: Mechanosensory abnormality protein 6 (377 aa).

The Cytoplasmic segment spans residues 1–13; sequence MGLQSAAAHFINR. Residues 14–34 form a helical membrane-spanning segment; that stretch reads FIIWITIFMVACFLLRLLVVL. Residues 35 to 377 are Extracellular-facing; sequence DLNKRVYNHT…HCDLTHSYIT (343 aa). Cysteine 48 and cysteine 369 are joined by a disulfide. Asparagine 94 is a glycosylation site (N-linked (GlcNAc...) asparagine).

This sequence belongs to the paraoxonase family. As to quaternary structure, component of a non-voltage-gated amiloride-sensitive cation channel complex (also called the degenerin channel complex) composed of at least the mec-2, mec-4, mec-6 and mec-10 subunits; the complex mediates mechanotransduction in touch cells. Interacts with mec-2, mec-4 and mec-10. In terms of processing, glycosylated. Expressed in neurons including the six touch receptors, ventral cord motor neurons, HSN, PVD, PVC, IL1, and several neurons near the nerve ring, in the anal ganglion and in the male tail sensory rays, in muscles including the body wall, vulval, intestinal, anal depressor and sphincter muscles, and in the excretory canal.

It localises to the cell membrane. The protein resides in the cell projection. The protein localises to the axon. In terms of biological role, subunit of an amiloride-sensitive cation channel (degenerin channel complex) permeable for sodium, potassium, lithium and N-methylglucamine, and required for mechanosensory transduction (touch sensitivity). Interacts with degenerin channel proteins and stabilizes the channel. Plays a role in mechanosensory transduction (touch sensitivity). The protein is Mechanosensory abnormality protein 6 of Caenorhabditis elegans.